The following is a 122-amino-acid chain: MKLSIGIIFCFLILGVNSREWLTFLKEAGQGAKDMWRAYSDMKEANYKNSDKYFHARGNYDAAKRGPGGVWAAEVISDARENYQKLIGRGAEDSKADQEANQWGRSGNDPNHFRPKGLPDKY.

The N-terminal stretch at 1–18 (MKLSIGIIFCFLILGVNS) is a signal peptide. Residues 88–122 (GRGAEDSKADQEANQWGRSGNDPNHFRPKGLPDKY) are disordered. A compositionally biased stretch (polar residues) spans 99–109 (EANQWGRSGND).

The protein belongs to the SAA family. In terms of tissue distribution, expressed by the liver; secreted in plasma. Expressed in synovial fibroblasts.

The protein resides in the secreted. Functionally, major acute phase reactant. Apolipoprotein of the HDL complex. In vitro exhibits antimicrobial activity against Escherichia coli, Streptococcus uberis and Pseudomonas aeruginosa. The protein is Serum amyloid A-3 protein (SAA3) of Oryctolagus cuniculus (Rabbit).